A 269-amino-acid chain; its full sequence is Hydroxypyruvate/pyruvate aldolase (269 aa).

The active-site Proton acceptor is the His-48. Residues Glu-152 and Asp-178 each coordinate a divalent metal cation.

This sequence belongs to the HpcH/HpaI aldolase family. The cofactor is a divalent metal cation.

It catalyses the reaction D-glyceraldehyde + pyruvate = 2-dehydro-3-deoxy-L-galactonate. Aldolase which can catalyze in vitro the aldolisation reaction between hydroxypyruvate (HPA) or pyruvate (PA) and D-glyceraldehyde (D-GA). The condensation of pyruvate and D-glyceraldehyde produces 2-dehydro-3-deoxy-L-galactonate as the major product. Has weak activity with hydroxypyruvate and D-glyceraldehyde. The chain is Hydroxypyruvate/pyruvate aldolase from Delftia acidovorans (strain DSM 14801 / SPH-1).